We begin with the raw amino-acid sequence, 155 residues long: SsrA-binding protein (155 aa).

This sequence belongs to the SmpB family.

The protein localises to the cytoplasm. Its function is as follows. Required for rescue of stalled ribosomes mediated by trans-translation. Binds to transfer-messenger RNA (tmRNA), required for stable association of tmRNA with ribosomes. tmRNA and SmpB together mimic tRNA shape, replacing the anticodon stem-loop with SmpB. tmRNA is encoded by the ssrA gene; the 2 termini fold to resemble tRNA(Ala) and it encodes a 'tag peptide', a short internal open reading frame. During trans-translation Ala-aminoacylated tmRNA acts like a tRNA, entering the A-site of stalled ribosomes, displacing the stalled mRNA. The ribosome then switches to translate the ORF on the tmRNA; the nascent peptide is terminated with the 'tag peptide' encoded by the tmRNA and targeted for degradation. The ribosome is freed to recommence translation, which seems to be the essential function of trans-translation. The polypeptide is SsrA-binding protein (Chelativorans sp. (strain BNC1)).